A 1188-amino-acid chain; its full sequence is DNA-directed RNA polymerase subunit beta (1188 aa).

Belongs to the RNA polymerase beta chain family. In terms of assembly, the RNAP catalytic core consists of 2 alpha, 1 beta, 1 beta' and 1 omega subunit. When a sigma factor is associated with the core the holoenzyme is formed, which can initiate transcription.

The enzyme catalyses RNA(n) + a ribonucleoside 5'-triphosphate = RNA(n+1) + diphosphate. DNA-dependent RNA polymerase catalyzes the transcription of DNA into RNA using the four ribonucleoside triphosphates as substrates. This is DNA-directed RNA polymerase subunit beta from Streptococcus pyogenes serotype M1.